A 182-amino-acid chain; its full sequence is MSVVETVLVALALGCDAFAVGMGVGTRFCNPRQIFRLSFHFGLFQMMMPIAGWFVGSRAADLVSTWGPWISFALLLFIGGKMAYESFRSLEAEDGECPDPTKGSSLVMLSVATSMDALGVGFSFGILGQQLFLSAVWIGITAGIMTWGAMRLGNRLSRQFGRRMETVGGLILVAIAVKLLLF.

Helical transmembrane passes span 6-26, 37-57, 59-79, 104-126, 131-149, and 164-181; these read TVLV…GVGT, LSFH…FVGS, AADL…LFIG, SSLV…SFGI, LFLS…TWGA, and METV…KLLL.

The protein belongs to the MntP (TC 9.B.29) family.

The protein localises to the cell inner membrane. Functionally, probably functions as a manganese efflux pump. This chain is Putative manganese efflux pump MntP, found in Syntrophobacter fumaroxidans (strain DSM 10017 / MPOB).